A 284-amino-acid chain; its full sequence is Avenin-like b8 (284 aa).

An N-terminal signal peptide occupies residues 1-18 (MKVFILALLALAATTAIA).

It belongs to the prolamin family. In terms of processing, contains disulfide bonds.

Seed storage protein. Might be integrated via inter-chain disulfide bonds within the glutenin polymer. In Triticum aestivum (Wheat), this protein is Avenin-like b8.